Reading from the N-terminus, the 135-residue chain is uncharacterized protein (135 aa).

One can recognise a HotDog ACOT-type domain in the interval 8–123 (PQGTIVLKTL…IFIYVAIDET (116 aa)).

Belongs to the acyl coenzyme A hydrolase family.

This is an uncharacterized protein from Buchnera aphidicola subsp. Schizaphis graminum (strain Sg).